Here is a 284-residue protein sequence, read N- to C-terminus: Tropomyosin beta chain (284 aa).

Met1 bears the N-acetylmethionine mark. A coiled-coil region spans residues 1–284; sequence MEAIKKKMQM…DNALNDITSL (284 aa). Composition is skewed to basic and acidic residues over residues 22–40 and 51–66; these read AEQA…KQLE and KGTE…SVKE. The disordered stretch occupies residues 22-66; it reads AEQAEADKKQAEDRCKQLEEEQQGLQKKLKGTEDEVEKYSESVKE.

This sequence belongs to the tropomyosin family. In terms of assembly, homodimer. Heterodimer of an alpha (TPM1, TPM3 or TPM4) and a beta (TPM2) chain.

It localises to the cytoplasm. Its subcellular location is the cytoskeleton. Functionally, binds to actin filaments in muscle and non-muscle cells. Plays a central role, in association with the troponin complex, in the calcium dependent regulation of vertebrate striated muscle contraction. Smooth muscle contraction is regulated by interaction with caldesmon. In non-muscle cells is implicated in stabilizing cytoskeleton actin filaments. In Gallus gallus (Chicken), this protein is Tropomyosin beta chain (TPM2).